A 382-amino-acid chain; its full sequence is Galactokinase (382 aa).

A substrate-binding site is contributed by 34-37 (EHTD). Residue 124–130 (GAGLSSS) coordinates ATP. The Mg(2+) site is built by Ser130 and Glu162. Asp174 functions as the Proton acceptor in the catalytic mechanism. Residue Tyr223 participates in substrate binding.

It belongs to the GHMP kinase family. GalK subfamily.

It localises to the cytoplasm. It catalyses the reaction alpha-D-galactose + ATP = alpha-D-galactose 1-phosphate + ADP + H(+). It participates in carbohydrate metabolism; galactose metabolism. Catalyzes the transfer of the gamma-phosphate of ATP to D-galactose to form alpha-D-galactose-1-phosphate (Gal-1-P). This is Galactokinase from Escherichia coli O9:H4 (strain HS).